A 1225-amino-acid chain; its full sequence is uncharacterized protein (1225 aa).

Polar residues predominate over residues 1-15 (MSSQAEPSKGASNAD). Positions 1-104 (MSSQAEPSKG…VDGVPTRPVS (104 aa)) are disordered. The span at 16-25 (PNEKVEKMHL) shows a compositional bias: basic and acidic residues. The span at 43–65 (ASPSDKNNLNPQSAGVSEVQVQD) shows a compositional bias: polar residues. A helical transmembrane segment spans residues 167–187 (FLFGYLRFGFLSLFIIMAVCI). The SMP-LTD domain maps to 217–422 (DSETVTWLNT…SPNVYELDIE (206 aa)). 3 consecutive C2 domains span residues 413-534 (SPNV…NDAF), 559-668 (DSGE…LLWF), and 685-803 (KPAQ…GALM). Serine 843 carries the post-translational modification Phosphoserine. The disordered stretch occupies residues 867 to 890 (PESQKTPTAVDNTSTSRGSTSVKT). Residues 869 to 890 (SQKTPTAVDNTSTSRGSTSVKT) are compositionally biased toward polar residues. One can recognise a C2 4 domain in the interval 1019 to 1137 (RLTPVPVKLE…QQQQQTNYEI (119 aa)). Ca(2+) is bound by residues aspartate 1053, aspartate 1059, aspartate 1107, aspartate 1109, and aspartate 1115.

It depends on Ca(2+) as a cofactor.

The protein localises to the endoplasmic reticulum membrane. This is an uncharacterized protein from Schizosaccharomyces pombe (strain 972 / ATCC 24843) (Fission yeast).